A 95-amino-acid chain; its full sequence is Large ribosomal subunit protein bL25 (95 aa).

Belongs to the bacterial ribosomal protein bL25 family. Part of the 50S ribosomal subunit; part of the 5S rRNA/L5/L18/L25 subcomplex. Contacts the 5S rRNA. Binds to the 5S rRNA independently of L5 and L18.

In terms of biological role, this is one of the proteins that binds to the 5S RNA in the ribosome where it forms part of the central protuberance. This is Large ribosomal subunit protein bL25 from Shewanella sediminis (strain HAW-EB3).